A 234-amino-acid chain; its full sequence is Probable pectate lyase F (234 aa).

Positions 1 to 17 (MWSSIAAFPVLVPVALA) are cleaved as a signal peptide.

Belongs to the polysaccharide lyase 3 family. Requires Ca(2+) as cofactor.

It is found in the secreted. It catalyses the reaction Eliminative cleavage of (1-&gt;4)-alpha-D-galacturonan to give oligosaccharides with 4-deoxy-alpha-D-galact-4-enuronosyl groups at their non-reducing ends.. In terms of biological role, pectinolytic enzyme consist of four classes of enzymes: pectin lyase, polygalacturonase, pectin methylesterase and rhamnogalacturonase. Among pectinolytic enzymes, pectin lyase is the most important in depolymerization of pectin, since it cleaves internal glycosidic bonds of highly methylated pectins. Favors pectate, the anion, over pectin, the methyl ester. In Aspergillus fumigatus (strain ATCC MYA-4609 / CBS 101355 / FGSC A1100 / Af293) (Neosartorya fumigata), this protein is Probable pectate lyase F (plyF).